Reading from the N-terminus, the 214-residue chain is UPF0725 protein At1g19565 (214 aa).

The interval 56 to 92 is disordered; it reads EEEYEPSLPSSESPTDSCHADHESPDSPKYQQPAPGE.

This sequence belongs to the UPF0725 (EMB2204) family.

This chain is UPF0725 protein At1g19565, found in Arabidopsis thaliana (Mouse-ear cress).